A 268-amino-acid polypeptide reads, in one-letter code: Proteasome subunit beta type-4 (268 aa).

This sequence belongs to the peptidase T1B family. In terms of assembly, the 26S proteasome consists of a 20S proteasome core and two 19S regulatory subunits. The 20S proteasome core is composed of 28 subunits that are arranged in four stacked rings, resulting in a barrel-shaped structure. The two end rings are each formed by seven alpha subunits, and the two central rings are each formed by seven beta subunits. The catalytic chamber with the active sites is on the inside of the barrel.

The protein resides in the cytoplasm. It localises to the nucleus. Non-catalytic component of the proteasome, a multicatalytic proteinase complex which is characterized by its ability to cleave peptides with Arg, Phe, Tyr, Leu, and Glu adjacent to the leaving group at neutral or slightly basic pH. The proteasome has an ATP-dependent proteolytic activity. This Drosophila melanogaster (Fruit fly) protein is Proteasome subunit beta type-4 (Prosbeta7).